Here is a 196-residue protein sequence, read N- to C-terminus: Transcriptional regulatory protein UhpA (196 aa).

One can recognise a Response regulatory domain in the interval 3 to 116; that stretch reads TVALIDDHLI…ELIAAVHTVA (114 aa). Residue D54 is modified to 4-aspartylphosphate. Residues 131–196 form the HTH luxR-type domain; the sequence is ASGRQDPLTK…ELARRMFDGW (66 aa). Positions 155-174 form a DNA-binding region, H-T-H motif; the sequence is VKEIAAELGLSPKTVHVHRA.

Phosphorylated and dephosphorylated by UhpB.

Its subcellular location is the cytoplasm. Its activity is regulated as follows. Phosphorylation by UhpB enhances DNA binding activity. Functionally, part of the UhpABC signaling cascade that controls the expression of the hexose phosphate transporter UhpT. Activates the transcription of the uhpT gene. Acts by binding specifically to the uhpT promoter region. The sequence is that of Transcriptional regulatory protein UhpA (uhpA) from Escherichia coli (strain K12).